The following is a 199-amino-acid chain: Fe/S biogenesis protein NfuA (199 aa).

Cys151 and Cys154 together coordinate [4Fe-4S] cluster.

It belongs to the NfuA family. As to quaternary structure, homodimer. The cofactor is [4Fe-4S] cluster.

In terms of biological role, involved in iron-sulfur cluster biogenesis. Binds a 4Fe-4S cluster, can transfer this cluster to apoproteins, and thereby intervenes in the maturation of Fe/S proteins. Could also act as a scaffold/chaperone for damaged Fe/S proteins. The chain is Fe/S biogenesis protein NfuA from Xanthomonas euvesicatoria pv. vesicatoria (strain 85-10) (Xanthomonas campestris pv. vesicatoria).